Here is a 184-residue protein sequence, read N- to C-terminus: GTP-binding protein Rheb (184 aa).

Residue Lys8 forms a Glycyl lysine isopeptide (Lys-Gly) (interchain with G-Cter in ubiquitin) linkage. The GDP site is built by Ser16 and Val17. Ser16 contacts GTP. GTP-binding residues include Gly18, Lys19, Ser20, Ser21, Val32, Tyr35, Thr38, Asn119, and Asp122. GDP-binding residues include Lys19, Ser20, and Ser21. Residue Ser20 coordinates Mg(2+). Residues 35–43 (YDPTIENTF) carry the Effector region motif. Thr38 is a GDP binding site. A Mg(2+)-binding site is contributed by Thr38. Asp122 contributes to the GDP binding site. Residue Ser130 is modified to Phosphoserine; by MAPKAPK5. Ala150 contributes to the GDP binding site. Ala150 contributes to the GTP binding site. Cys181 is subject to Cysteine methyl ester. Cys181 carries S-farnesyl cysteine lipidation. Positions 182-184 (SVM) are cleaved as a propeptide — removed in mature form.

The protein belongs to the small GTPase superfamily. Rheb family. In terms of assembly, associates with the mTORC1 complex (MTOR, MLST8 and RPTOR) in a guanyl nucleotide-independent manner. Interacts with TSC2. Interacts with MCRS1; the interaction maintains RHEB at the lysosome in its active GTP-bound form and prevents its interaction with the mTORC1 complex inhibitor TSC2, ensuring activation of the mTORC1 complex by RHEB. Interacts (when prenylated) with PDE6D; this promotes release from membranes. Farnesylation is important for efficiently activating mTORC1-mediated signaling. In terms of processing, polyubiquitinated in response to amino acid, promoting its interaction with MTOR and mTORC1 activation. Deubiquitination by ATXN3 promotes recruitment of the TSC-TBC complex and RHEB inactivation by TSC2. Monoubiquitinated at Lys-8 by RNF152, promoting its association with the TSC-TBC complex. Deubiquitinated at Lys-8 by USP4, promoting mTORC1 activation. Post-translationally, phosphorylation by MAPKAPK5 impairs GTP-binding and inactivation. Expressed at high levels in normal adult cortex as well as a number of peripheral tissues, including lung and intestine.

The protein resides in the endomembrane system. The protein localises to the lysosome membrane. It localises to the golgi apparatus membrane. It is found in the endoplasmic reticulum membrane. Its subcellular location is the cytoplasm. The protein resides in the cytosol. It catalyses the reaction GTP + H2O = GDP + phosphate + H(+). Alternates between an inactive form bound to GDP and an active form bound to GTP. Inactivated by the TSC-TBC complex via the GTPase activating protein (GAP) domain of TSC2. Autoinhibited by Tyr-35, which constrains the active site conformation, restricting the access of the catalytic Asp-65 to the nucleotide-binding pocket. Its function is as follows. Small GTPase that acts as an allosteric activator of the canonical mTORC1 complex, an evolutionarily conserved central nutrient sensor that stimulates anabolic reactions and macromolecule biosynthesis to promote cellular biomass generation and growth. In response to nutrients, growth factors or amino acids, specifically activates the protein kinase activity of MTOR, the catalytic component of the mTORC1 complex: acts by causing a conformational change that allows the alignment of residues in the active site of MTOR, thereby enhancing the phosphorylation of ribosomal protein S6 kinase (RPS6KB1 and RPS6KB2) and EIF4EBP1 (4E-BP1). RHEB is also required for localization of the TSC-TBC complex to lysosomal membranes. In response to starvation, RHEB is inactivated by the TSC-TBC complex, preventing activation of mTORC1. Has low intrinsic GTPase activity. The polypeptide is GTP-binding protein Rheb (Rattus norvegicus (Rat)).